The sequence spans 603 residues: Elongation factor 4 (603 aa).

Positions 6–188 (SKIRNFCIIA…QIVKKIPAPT (183 aa)) constitute a tr-type G domain. Residues 18–23 (DHGKST) and 135–138 (NKVD) each bind GTP.

This sequence belongs to the TRAFAC class translation factor GTPase superfamily. Classic translation factor GTPase family. LepA subfamily.

It localises to the cell membrane. The catalysed reaction is GTP + H2O = GDP + phosphate + H(+). Required for accurate and efficient protein synthesis under certain stress conditions. May act as a fidelity factor of the translation reaction, by catalyzing a one-codon backward translocation of tRNAs on improperly translocated ribosomes. Back-translocation proceeds from a post-translocation (POST) complex to a pre-translocation (PRE) complex, thus giving elongation factor G a second chance to translocate the tRNAs correctly. Binds to ribosomes in a GTP-dependent manner. In Agathobacter rectalis (strain ATCC 33656 / DSM 3377 / JCM 17463 / KCTC 5835 / VPI 0990) (Eubacterium rectale), this protein is Elongation factor 4.